The chain runs to 307 residues: UDP-3-O-acyl-N-acetylglucosamine deacetylase (307 aa).

Zn(2+) contacts are provided by His78, His241, and Asp245. The Proton donor role is filled by His268.

Belongs to the LpxC family. It depends on Zn(2+) as a cofactor.

The catalysed reaction is a UDP-3-O-[(3R)-3-hydroxyacyl]-N-acetyl-alpha-D-glucosamine + H2O = a UDP-3-O-[(3R)-3-hydroxyacyl]-alpha-D-glucosamine + acetate. Its pathway is glycolipid biosynthesis; lipid IV(A) biosynthesis; lipid IV(A) from (3R)-3-hydroxytetradecanoyl-[acyl-carrier-protein] and UDP-N-acetyl-alpha-D-glucosamine: step 2/6. Catalyzes the hydrolysis of UDP-3-O-myristoyl-N-acetylglucosamine to form UDP-3-O-myristoylglucosamine and acetate, the committed step in lipid A biosynthesis. This Polaromonas naphthalenivorans (strain CJ2) protein is UDP-3-O-acyl-N-acetylglucosamine deacetylase.